Here is a 545-residue protein sequence, read N- to C-terminus: Adenine deaminase (545 aa).

Belongs to the metallo-dependent hydrolases superfamily. Adenine deaminase family. Mn(2+) is required as a cofactor.

It catalyses the reaction adenine + H2O + H(+) = hypoxanthine + NH4(+). This Salinibacter ruber (strain DSM 13855 / M31) protein is Adenine deaminase.